Consider the following 108-residue polypeptide: UPF0235 protein APE_0182.1 (108 aa).

The protein belongs to the UPF0235 family.

In Aeropyrum pernix (strain ATCC 700893 / DSM 11879 / JCM 9820 / NBRC 100138 / K1), this protein is UPF0235 protein APE_0182.1.